Consider the following 279-residue polypeptide: Proto-oncogene FRAT1 (279 aa).

2 disordered regions span residues 1 to 24 (MPCRREEEEEAGEEAEGEEEEEDS) and 56 to 76 (AQHSPASPCGPPGAPLRAPGP). A compositionally biased stretch (acidic residues) spans 7–24 (EEEEAGEEAEGEEEEEDS). Residue S88 is modified to Phosphoserine. 2 disordered regions span residues 136-200 (GPSA…DDPH) and 228-279 (RAKL…VPGS). The involved in GSK-3 binding stretch occupies residues 198–220 (DPHRLLQQLVLSGNLIKEAVRRL). 2 positions are modified to phosphoserine: S249 and S252.

The protein belongs to the GSK-3-binding protein family. In terms of assembly, binds DVL1. Binds GSK-3 and prevent GSK-3-dependent phosphorylation. Post-translationally, phosphorylated.

The protein resides in the cytoplasm. Its function is as follows. Positively regulates the Wnt signaling pathway by stabilizing beta-catenin through the association with GSK-3. May play a role in tumor progression and collaborate with PIM1 and MYC in lymphomagenesis. The sequence is that of Proto-oncogene FRAT1 (FRAT1) from Homo sapiens (Human).